The primary structure comprises 353 residues: Quinolinate synthase (353 aa).

Residues His-47 and Ser-68 each coordinate iminosuccinate. Position 113 (Cys-113) interacts with [4Fe-4S] cluster. Iminosuccinate contacts are provided by residues Tyr-139–Asn-141 and Ser-156. Cys-200 provides a ligand contact to [4Fe-4S] cluster. Iminosuccinate contacts are provided by residues His-226–Glu-228 and Thr-243. Cys-297 is a binding site for [4Fe-4S] cluster.

The protein belongs to the quinolinate synthase family. Type 1 subfamily. [4Fe-4S] cluster is required as a cofactor.

The protein resides in the cytoplasm. The enzyme catalyses iminosuccinate + dihydroxyacetone phosphate = quinolinate + phosphate + 2 H2O + H(+). It functions in the pathway cofactor biosynthesis; NAD(+) biosynthesis; quinolinate from iminoaspartate: step 1/1. Catalyzes the condensation of iminoaspartate with dihydroxyacetone phosphate to form quinolinate. In Pectobacterium atrosepticum (strain SCRI 1043 / ATCC BAA-672) (Erwinia carotovora subsp. atroseptica), this protein is Quinolinate synthase.